The chain runs to 31 residues: Cytochrome b6-f complex subunit 6 (31 aa).

A helical membrane pass occupies residues 4 to 26 (IVSYFGFLLTASTITPALFIGLS).

Belongs to the PetL family. In terms of assembly, the 4 large subunits of the cytochrome b6-f complex are cytochrome b6, subunit IV (17 kDa polypeptide, PetD), cytochrome f and the Rieske protein, while the 4 small subunits are PetG, PetL, PetM and PetN. The complex functions as a dimer.

The protein resides in the plastid. The protein localises to the chloroplast thylakoid membrane. Component of the cytochrome b6-f complex, which mediates electron transfer between photosystem II (PSII) and photosystem I (PSI), cyclic electron flow around PSI, and state transitions. PetL is important for photoautotrophic growth as well as for electron transfer efficiency and stability of the cytochrome b6-f complex. This Nymphaea alba (White water-lily) protein is Cytochrome b6-f complex subunit 6.